A 207-amino-acid chain; its full sequence is 3-isopropylmalate dehydratase small subunit (207 aa).

This sequence belongs to the LeuD family. LeuD type 1 subfamily. Heterodimer of LeuC and LeuD.

It catalyses the reaction (2R,3S)-3-isopropylmalate = (2S)-2-isopropylmalate. It participates in amino-acid biosynthesis; L-leucine biosynthesis; L-leucine from 3-methyl-2-oxobutanoate: step 2/4. Its function is as follows. Catalyzes the isomerization between 2-isopropylmalate and 3-isopropylmalate, via the formation of 2-isopropylmaleate. The sequence is that of 3-isopropylmalate dehydratase small subunit from Rhodospirillum rubrum (strain ATCC 11170 / ATH 1.1.1 / DSM 467 / LMG 4362 / NCIMB 8255 / S1).